Here is a 313-residue protein sequence, read N- to C-terminus: MKEKIVIALGGNAIQTKEATAEAQQTAIRRAMQNLKPLFDSPARIVISHGNGPQIGGLLIQQAKSNSDTTPAMPLDTCGAMSQGMIGYWLETEINRILTEMNSDRTVGTIVTRVEVDKDDPRFDNPTKPIGPFYTKEEVEELQKEQPGSVFKEDAGRGYRKVVASPLPQSILEHQLIRTLADGKNIVIACGGGGIPVIKKENTYEGVEAVIDKDFASEKLATLIEADTLMILTNVENVFINFNEPNQQQIDDIDVATLKKYAAQGKFAEGSMLPKIEAAIRFVESGENKKVIITNLEQAYEALIGNKGTHIHM.

This sequence belongs to the carbamate kinase family.

It localises to the cytoplasm. It catalyses the reaction hydrogencarbonate + NH4(+) + ATP = carbamoyl phosphate + ADP + H2O + H(+). It functions in the pathway metabolic intermediate metabolism; carbamoyl phosphate degradation; CO(2) and NH(3) from carbamoyl phosphate: step 1/1. This chain is Carbamate kinase 2 (arcC2), found in Staphylococcus aureus (strain MRSA252).